The following is a 227-amino-acid chain: Cytochrome c oxidase subunit 2 (227 aa).

At 1–14 (MAYPFQLGLQDATS) the chain is on the mitochondrial intermembrane side. Residues 15 to 45 (PIMEELTNFHDHTLMIVFLISSLVLYIISLM) traverse the membrane as a helical segment. Over 46–59 (LTTKLTHTSTMDAQ) the chain is Mitochondrial matrix. Residues 60–87 (EVETIWTILPAAILVLIALPSLRILYMM) form a helical membrane-spanning segment. Topologically, residues 88–227 (DEINNPALTV…YFENWSASMI (140 aa)) are mitochondrial intermembrane. His-161, Cys-196, Glu-198, Cys-200, His-204, and Met-207 together coordinate Cu cation. Glu-198 lines the Mg(2+) pocket. At Tyr-218 the chain carries Phosphotyrosine.

It belongs to the cytochrome c oxidase subunit 2 family. As to quaternary structure, component of the cytochrome c oxidase (complex IV, CIV), a multisubunit enzyme composed of 14 subunits. The complex is composed of a catalytic core of 3 subunits MT-CO1, MT-CO2 and MT-CO3, encoded in the mitochondrial DNA, and 11 supernumerary subunits COX4I, COX5A, COX5B, COX6A, COX6B, COX6C, COX7A, COX7B, COX7C, COX8 and NDUFA4, which are encoded in the nuclear genome. The complex exists as a monomer or a dimer and forms supercomplexes (SCs) in the inner mitochondrial membrane with NADH-ubiquinone oxidoreductase (complex I, CI) and ubiquinol-cytochrome c oxidoreductase (cytochrome b-c1 complex, complex III, CIII), resulting in different assemblies (supercomplex SCI(1)III(2)IV(1) and megacomplex MCI(2)III(2)IV(2)). Found in a complex with TMEM177, COA6, COX18, COX20, SCO1 and SCO2. Interacts with TMEM177 in a COX20-dependent manner. Interacts with COX20. Interacts with COX16. It depends on Cu cation as a cofactor.

It is found in the mitochondrion inner membrane. The catalysed reaction is 4 Fe(II)-[cytochrome c] + O2 + 8 H(+)(in) = 4 Fe(III)-[cytochrome c] + 2 H2O + 4 H(+)(out). In terms of biological role, component of the cytochrome c oxidase, the last enzyme in the mitochondrial electron transport chain which drives oxidative phosphorylation. The respiratory chain contains 3 multisubunit complexes succinate dehydrogenase (complex II, CII), ubiquinol-cytochrome c oxidoreductase (cytochrome b-c1 complex, complex III, CIII) and cytochrome c oxidase (complex IV, CIV), that cooperate to transfer electrons derived from NADH and succinate to molecular oxygen, creating an electrochemical gradient over the inner membrane that drives transmembrane transport and the ATP synthase. Cytochrome c oxidase is the component of the respiratory chain that catalyzes the reduction of oxygen to water. Electrons originating from reduced cytochrome c in the intermembrane space (IMS) are transferred via the dinuclear copper A center (CU(A)) of subunit 2 and heme A of subunit 1 to the active site in subunit 1, a binuclear center (BNC) formed by heme A3 and copper B (CU(B)). The BNC reduces molecular oxygen to 2 water molecules using 4 electrons from cytochrome c in the IMS and 4 protons from the mitochondrial matrix. In Rhabdomys pumilio (Four-striped grass mouse), this protein is Cytochrome c oxidase subunit 2 (MT-CO2).